We begin with the raw amino-acid sequence, 570 residues long: Molecular chaperone MKKS (570 aa).

Residue 192–199 (ERMVLGKS) coordinates ATP. The segment at 198–370 (KSIIVPLKGQ…FHLLPNEATV (173 aa)) is substrate-binding apical domain.

The protein belongs to the TCP-1 chaperonin family. As to quaternary structure, component of a complex composed at least of MKKS, BBS10, BBS12, TCP1, CCT2, CCT3, CCT4, CCT5 and CCT8. Interacts with STUB1. Interacts with BBS2 (via coiled coil domain). Interacts with CCDC28B. Interacts with BBS12. Interacts with SMARCC1, a component of the SWI/SNF complexes; the interaction takes place predominantly in the cytoplasm and may modulate SMARCC1 location. Interacts with DLEC1. In terms of tissue distribution, widely expressed in adult and fetal tissues. Expressed in the developing heart, brain retina, limb buds, as well as in the developing neural tube. Expressed in the embryo in the first and second branchial arches. Expressed in parafin embedded tissue sections of brain, kidney, retina, olfactory epithelium and the ependymal layer of ventricles. Detected only in restricted regions of these tissue sections, including the ciliated border of renal tubules, the connecting cilium and the inner and outer nuclear layers of retina, and the ciliated layer of olfactory epithelia.

The protein localises to the cytoplasm. Its subcellular location is the cytoskeleton. It localises to the microtubule organizing center. The protein resides in the centrosome. It is found in the cytosol. The protein localises to the nucleus. Functionally, probable molecular chaperone that assists the folding of proteins upon ATP hydrolysis. Plays a role in the assembly of BBSome, a complex involved in ciliogenesis regulating transports vesicles to the cilia. May play a role in protein processing in limb, cardiac and reproductive system development. May play a role in cytokinesis. This Mus musculus (Mouse) protein is Molecular chaperone MKKS (Mkks).